A 575-amino-acid chain; its full sequence is Proline--tRNA ligase, cytoplasmic (575 aa).

It belongs to the class-II aminoacyl-tRNA synthetase family.

The protein resides in the cytoplasm. The catalysed reaction is tRNA(Pro) + L-proline + ATP = L-prolyl-tRNA(Pro) + AMP + diphosphate. In Candida albicans (Yeast), this protein is Proline--tRNA ligase, cytoplasmic (PRS).